Reading from the N-terminus, the 81-residue chain is uncharacterized protein (81 aa).

Expressed in fetal brain.

This is an uncharacterized protein from Homo sapiens (Human).